We begin with the raw amino-acid sequence, 437 residues long: ATP-dependent RNA helicase RhlB (437 aa).

The Q motif motif lies at 9–37 (QKFADLGLQPQVTEGLEKKGFEYCTPIQA). The region spanning 40 to 219 (LPVLLTGQDI…FEHMHNPEHV (180 aa)) is the Helicase ATP-binding domain. 53 to 60 (AQTGTGKT) provides a ligand contact to ATP. The DEAD box motif lies at 165-168 (DEAD). One can recognise a Helicase C-terminal domain in the interval 245-390 (ALLQTLIEEE…VSEYDASALI (146 aa)). Residues 397–437 (IRMRAPRVQQRRTNTGGTRSGNRKPQGRRPRQPRQSAPKQS) are disordered. The segment covering 417 to 428 (GNRKPQGRRPRQ) has biased composition (basic residues).

Belongs to the DEAD box helicase family. RhlB subfamily. Component of the RNA degradosome, which is a multiprotein complex involved in RNA processing and mRNA degradation.

It is found in the cytoplasm. It catalyses the reaction ATP + H2O = ADP + phosphate + H(+). DEAD-box RNA helicase involved in RNA degradation. Has RNA-dependent ATPase activity and unwinds double-stranded RNA. In Vibrio parahaemolyticus serotype O3:K6 (strain RIMD 2210633), this protein is ATP-dependent RNA helicase RhlB.